A 274-amino-acid chain; its full sequence is uncharacterized protein (274 aa).

The first 30 residues, 1 to 30 (MTVYTPTSERQAPATTHRQMWALGDYAAIA), serve as a signal peptide directing secretion.

This sequence to M.tuberculosis Rv1405c.

This is an uncharacterized protein from Mycobacterium tuberculosis (strain CDC 1551 / Oshkosh).